Here is a 507-residue protein sequence, read N- to C-terminus: Cell cycle serine/threonine-protein kinase hsk1 (507 aa).

Phosphoserine is present on Ser22. The 366-residue stretch at 68 to 433 folds into the Protein kinase domain; it reads YRLIEKIGEG…AEEALDHDFL (366 aa). ATP-binding positions include 74 to 82 and Lys129; that span reads IGEGTFSSV. Asp216 (proton acceptor) is an active-site residue. The residue at position 291 (Thr291) is a Phosphothreonine. The disordered stretch occupies residues 475-507; the sequence is FKEQEETDEPTSLSKRKRSIDEILPNDALQDGA. Ser493 is subject to Phosphoserine.

Belongs to the protein kinase superfamily. Ser/Thr protein kinase family. CDC7 subfamily. In terms of assembly, heterodimer with the regulatory subunit him1/dfp1. May form homooligomeric complexes. Interacts with mcm10. Autophosphorylated. Phosphorylated by cds1 in vitro.

The protein resides in the nucleus. The enzyme catalyses L-seryl-[protein] + ATP = O-phospho-L-seryl-[protein] + ADP + H(+). It catalyses the reaction L-threonyl-[protein] + ATP = O-phospho-L-threonyl-[protein] + ADP + H(+). Its activity is regulated as follows. Phosphorylation of exogenous substrates activated by Dfp1. Required for G1/S transition. Plays a role in DNA replication checkpoint signaling through regulating rad3 and cds1. Involved in the maintenance of mitotic chromosome structures during S phase through regulating the function of rad21. Required for initiation of mitotic DNA replication through phosphorylating mcm2/cdc19. Required for genome integrity. The chain is Cell cycle serine/threonine-protein kinase hsk1 (hsk1) from Schizosaccharomyces pombe (strain 972 / ATCC 24843) (Fission yeast).